The following is a 124-amino-acid chain: UPF0299 membrane protein VP1300 (124 aa).

A run of 4 helical transmembrane segments spans residues 9 to 29, 35 to 55, 72 to 92, and 95 to 115; these read LIQL…GITI, VSVP…TLGL, MILL…MLLA, and LPII…LAWL.

The protein belongs to the UPF0299 family.

It localises to the cell inner membrane. This is UPF0299 membrane protein VP1300 from Vibrio parahaemolyticus serotype O3:K6 (strain RIMD 2210633).